The chain runs to 97 residues: UPF0213 protein YE0453 (97 aa).

Positions 4-79 constitute a GIY-YIG domain; that stretch reads SLWHLYLLRT…KQLSKQQKEK (76 aa).

It belongs to the UPF0213 family.

This Yersinia enterocolitica serotype O:8 / biotype 1B (strain NCTC 13174 / 8081) protein is UPF0213 protein YE0453.